The chain runs to 116 residues: NADPH-dependent 7-cyano-7-deazaguanine reductase (116 aa).

The active-site Thioimide intermediate is cysteine 31. The active-site Proton donor is aspartate 38. Substrate-binding positions include 53–55 and 72–73; these read IEL and YE.

It belongs to the GTP cyclohydrolase I family. QueF type 1 subfamily.

It is found in the cytoplasm. The catalysed reaction is 7-aminomethyl-7-carbaguanine + 2 NADP(+) = 7-cyano-7-deazaguanine + 2 NADPH + 3 H(+). It participates in tRNA modification; tRNA-queuosine biosynthesis. Its function is as follows. Catalyzes the NADPH-dependent reduction of 7-cyano-7-deazaguanine (preQ0) to 7-aminomethyl-7-deazaguanine (preQ1). The chain is NADPH-dependent 7-cyano-7-deazaguanine reductase from Chlorobaculum parvum (strain DSM 263 / NCIMB 8327) (Chlorobium vibrioforme subsp. thiosulfatophilum).